The sequence spans 518 residues: Serine/threonine-protein kinase PRR1 (518 aa).

Residue Met-1 is modified to N-acetylmethionine. Polar residues predominate over residues 1–12; sequence MDEYSSIYSQPK. Residues 1–59 form a disordered region; sequence MDEYSSIYSQPKTPRLKQEGFPDSIGDQHEKALIDENGEEDKKMASTEGTTGDSRSTPL. The span at 16–45 shows a compositional bias: basic and acidic residues; sequence LKQEGFPDSIGDQHEKALIDENGEEDKKMA. Residues 47–59 are compositionally biased toward polar residues; the sequence is TEGTTGDSRSTPL. Phosphoserine is present on Ser-132. A Protein kinase domain is found at 192 to 508; sequence WKKVRPIGSG…INEIYESPFV (317 aa). ATP contacts are provided by residues 198 to 206 and Lys-225; that span reads IGSGNFSTV. The active-site Proton acceptor is Asp-354.

It belongs to the protein kinase superfamily. CAMK Ser/Thr protein kinase family. NIM1 subfamily.

The protein resides in the cytoplasm. It carries out the reaction L-seryl-[protein] + ATP = O-phospho-L-seryl-[protein] + ADP + H(+). The catalysed reaction is L-threonyl-[protein] + ATP = O-phospho-L-threonyl-[protein] + ADP + H(+). In terms of biological role, protein kinase that functions as a regulator in the pheromone-induced mating pathway downstream of mitogen-activated protein kinase (MAPK) FUS3. Diminishes transcriptional induction of genes in response to pheromone signaling. The sequence is that of Serine/threonine-protein kinase PRR1 (PRR1) from Saccharomyces cerevisiae (strain ATCC 204508 / S288c) (Baker's yeast).